Here is a 252-residue protein sequence, read N- to C-terminus: Probable transcriptional regulator SauR (252 aa).

In terms of domain architecture, HTH iclR-type spans 6 to 68 (NAAAVRAFRI…AGNRHYECSS (63 aa)). Positions 28–47 (LAAIVQAIELPKQTVHRILK) form a DNA-binding region, H-T-H motif. The region spanning 83-252 (PAAARHAILQ…ADEMVKTFCE (170 aa)) is the IclR-ED domain.

Its function is as follows. May regulate transcription of the sauSTU operon. This is Probable transcriptional regulator SauR (sauR) from Cupriavidus necator (strain ATCC 17699 / DSM 428 / KCTC 22496 / NCIMB 10442 / H16 / Stanier 337) (Ralstonia eutropha).